We begin with the raw amino-acid sequence, 515 residues long: Cytidine and dCMP deaminase domain-containing protein 1 (515 aa).

2 stretches are compositionally biased toward polar residues: residues 1 to 11 (MKEAGQMQNLE) and 18 to 27 (SVSTQTGSMT). Disordered stretches follow at residues 1 to 27 (MKEAGQMQNLESARAGRSVSTQTGSMT) and 56 to 83 (RQKSQKNEEGKHGPLGDNEEMTRVSTDK). Basic and acidic residues predominate over residues 60-83 (QKNEEGKHGPLGDNEEMTRVSTDK). One can recognise a CMP/dCMP-type deaminase 1 domain in the interval 71-169 (GDNEEMTRVS…SLLTEASSSE (99 aa)). 3 residues coordinate Zn(2+): histidine 110, cysteine 135, and cysteine 138. The short motif at 272-284 (NLRQNMKDLILLL) is the Nuclear export signal element. Positions 318 to 483 (EIARHCMVQA…LNPSEAYGLE (166 aa)) constitute a CMP/dCMP-type deaminase 2 domain. Residue histidine 399 participates in Zn(2+) binding. The active-site Proton donor is glutamate 401. Zn(2+) is bound by residues cysteine 427 and cysteine 430. The tract at residues 481–515 (GLEQNEPERRENGVLRPVPQKEEQHQDKKLRLGIH) is disordered. The span at 486–515 (EPERRENGVLRPVPQKEEQHQDKKLRLGIH) shows a compositional bias: basic and acidic residues. Positions 489–511 (RRENGVLRPVPQKEEQHQDKKLR) match the Bipartite nuclear localization signal motif.

The protein belongs to the cytidine and deoxycytidylate deaminase family. Zn(2+) is required as a cofactor.

The protein localises to the cytoplasm. Its subcellular location is the nucleus. The enzyme catalyses 2'-deoxycytidine + H2O + H(+) = 2'-deoxyuridine + NH4(+). The catalysed reaction is cytidine + H2O + H(+) = uridine + NH4(+). In terms of biological role, catalyzes the deamination of cytidine and deoxycytidine into uridine and deoxyuridine, respectively. May play an important role in testicular development and spermatogenesis. The chain is Cytidine and dCMP deaminase domain-containing protein 1 (CDADC1) from Macaca fascicularis (Crab-eating macaque).